Here is a 264-residue protein sequence, read N- to C-terminus: H-2 class II histocompatibility antigen, I-E beta chain (264 aa).

The N-terminal stretch at 1 to 31 (MVWLPRVPCVAAVILLLTVLSPPVALVRNSR) is a signal peptide. Positions 32-121 (PRFLEYSTSE…IFDNFLVPRR (90 aa)) are beta-1. At 32-225 (PRFLEYSTSE…KAQSTSAQNK (194 aa)) the chain is on the extracellular side. Disulfide bonds link cysteine 42-cysteine 106 and cysteine 144-cysteine 200. A glycan (N-linked (GlcNAc...) asparagine) is linked at asparagine 46. The segment at 122–215 (VEPTVTVYPT…SLTDPVTVEW (94 aa)) is beta-2. The 91-residue stretch at 124 to 214 (PTVTVYPTKT…PSLTDPVTVE (91 aa)) folds into the Ig-like C1-type domain. The interval 216-225 (KAQSTSAQNK) is connecting peptide. Residues 226–248 (MLSGVGGFVLGLLFLGAGLFIYF) form a helical membrane-spanning segment. Over 249 to 264 (RNQKGQSGLQPTGLLS) the chain is Cytoplasmic.

It belongs to the MHC class II family. In terms of processing, ubiquitinated in immature dendritic cells leading to down-regulation of MHC class II.

It localises to the membrane. The protein is H-2 class II histocompatibility antigen, I-E beta chain (H2-Eb1) of Mus musculus (Mouse).